A 143-amino-acid polypeptide reads, in one-letter code: MRILGLDFGSKTVGVAVSDELLITAQGVEIVRRKSPSKLRQTLARIEEIIAEYKVDRIVLGYPKNMNNTEGERCEKTKEFGDMLARRTGLEVIYWDERLTTVAADRSMMETGIRRENRKEFVDEIAAIFILQGYLDYLSNSRS.

The protein belongs to the YqgF nuclease family.

It localises to the cytoplasm. Could be a nuclease involved in processing of the 5'-end of pre-16S rRNA. The chain is Putative pre-16S rRNA nuclease from Agathobacter rectalis (strain ATCC 33656 / DSM 3377 / JCM 17463 / KCTC 5835 / VPI 0990) (Eubacterium rectale).